The following is a 361-amino-acid chain: Phenylalanine 4-monooxygenase, chloroplastic (361 aa).

Residues 1 to 55 (MLALRQGALLLSARGGQTTHDNLQLCAGPSRRPRARWISSAPRPSTLVERHIRPQ) constitute a chloroplast transit peptide. Residues 47–67 (LVERHIRPQASTASDATTSTS) are disordered. The span at 56–67 (ASTASDATTSTS) shows a compositional bias: low complexity. His227, His232, and Glu272 together coordinate Fe cation.

The protein belongs to the biopterin-dependent aromatic amino acid hydroxylase family. Fe(2+) serves as cofactor.

It localises to the plastid. Its subcellular location is the chloroplast. The catalysed reaction is (6R)-L-erythro-5,6,7,8-tetrahydrobiopterin + L-phenylalanine + O2 = (4aS,6R)-4a-hydroxy-L-erythro-5,6,7,8-tetrahydrobiopterin + L-tyrosine. Catalyzes the hydroxylation of L-phenylalanine to L-tyrosine. Can functionally complement an Escherichia coli tyrosine auxotroph. The chain is Phenylalanine 4-monooxygenase, chloroplastic from Chlamydomonas reinhardtii (Chlamydomonas smithii).